The primary structure comprises 647 residues: tRNA uridine 5-carboxymethylaminomethyl modification enzyme MnmG (647 aa).

FAD contacts are provided by residues 22-27, V134, and S189; that span reads GAGHAG. 283–297 is a binding site for NAD(+); that stretch reads GARYCPSIEDKIMRF. Residue Q380 participates in FAD binding.

Belongs to the MnmG family. As to quaternary structure, homodimer. Heterotetramer of two MnmE and two MnmG subunits. FAD is required as a cofactor.

It localises to the cytoplasm. NAD-binding protein involved in the addition of a carboxymethylaminomethyl (cmnm) group at the wobble position (U34) of certain tRNAs, forming tRNA-cmnm(5)s(2)U34. In Desulfotalea psychrophila (strain LSv54 / DSM 12343), this protein is tRNA uridine 5-carboxymethylaminomethyl modification enzyme MnmG.